A 310-amino-acid polypeptide reads, in one-letter code: tRNA pseudouridine synthase B (310 aa).

Asp38 serves as the catalytic Nucleophile.

This sequence belongs to the pseudouridine synthase TruB family. Type 1 subfamily.

It carries out the reaction uridine(55) in tRNA = pseudouridine(55) in tRNA. Its function is as follows. Responsible for synthesis of pseudouridine from uracil-55 in the psi GC loop of transfer RNAs. This is tRNA pseudouridine synthase B from Geotalea uraniireducens (strain Rf4) (Geobacter uraniireducens).